We begin with the raw amino-acid sequence, 357 residues long: Phenylalanine--tRNA ligase alpha subunit (357 aa).

Glu278 serves as a coordination point for Mg(2+).

It belongs to the class-II aminoacyl-tRNA synthetase family. Phe-tRNA synthetase alpha subunit type 1 subfamily. In terms of assembly, tetramer of two alpha and two beta subunits. Mg(2+) is required as a cofactor.

It is found in the cytoplasm. It catalyses the reaction tRNA(Phe) + L-phenylalanine + ATP = L-phenylalanyl-tRNA(Phe) + AMP + diphosphate + H(+). The chain is Phenylalanine--tRNA ligase alpha subunit from Albidiferax ferrireducens (strain ATCC BAA-621 / DSM 15236 / T118) (Rhodoferax ferrireducens).